Consider the following 300-residue polypeptide: Ornithine carbamoyltransferase (300 aa).

Carbamoyl phosphate-binding positions include 49 to 52 (STRT), Gln76, Arg100, and 127 to 130 (HPCQ). Residues Asn158, Asp218, and 222–223 (SM) contribute to the L-ornithine site. Carbamoyl phosphate-binding positions include 258-259 (CL) and Arg286.

This sequence belongs to the aspartate/ornithine carbamoyltransferase superfamily. OTCase family.

The protein resides in the cytoplasm. The enzyme catalyses carbamoyl phosphate + L-ornithine = L-citrulline + phosphate + H(+). Its pathway is amino-acid biosynthesis; L-arginine biosynthesis; L-arginine from L-ornithine and carbamoyl phosphate: step 1/3. Reversibly catalyzes the transfer of the carbamoyl group from carbamoyl phosphate (CP) to the N(epsilon) atom of ornithine (ORN) to produce L-citrulline. This is Ornithine carbamoyltransferase from Oleidesulfovibrio alaskensis (strain ATCC BAA-1058 / DSM 17464 / G20) (Desulfovibrio alaskensis).